The chain runs to 326 residues: Glycerol-3-phosphate dehydrogenase [NAD(P)+] (326 aa).

Trp-15, Arg-35, and Lys-107 together coordinate NADPH. Lys-107, Gly-135, and Ser-137 together coordinate sn-glycerol 3-phosphate. NADPH is bound at residue Ala-139. Positions 190, 243, 253, 254, and 255 each coordinate sn-glycerol 3-phosphate. The active-site Proton acceptor is the Lys-190. Position 254 (Arg-254) interacts with NADPH. Residues Leu-273 and Glu-275 each coordinate NADPH.

The protein belongs to the NAD-dependent glycerol-3-phosphate dehydrogenase family.

It is found in the cytoplasm. The enzyme catalyses sn-glycerol 3-phosphate + NAD(+) = dihydroxyacetone phosphate + NADH + H(+). It carries out the reaction sn-glycerol 3-phosphate + NADP(+) = dihydroxyacetone phosphate + NADPH + H(+). It functions in the pathway membrane lipid metabolism; glycerophospholipid metabolism. In terms of biological role, catalyzes the reduction of the glycolytic intermediate dihydroxyacetone phosphate (DHAP) to sn-glycerol 3-phosphate (G3P), the key precursor for phospholipid synthesis. The protein is Glycerol-3-phosphate dehydrogenase [NAD(P)+] of Bradyrhizobium diazoefficiens (strain JCM 10833 / BCRC 13528 / IAM 13628 / NBRC 14792 / USDA 110).